Here is a 44-residue protein sequence, read N- to C-terminus: Photosystem II reaction center protein K (44 aa).

Residues 1–7 (MTTLLLA) constitute a propeptide that is removed on maturation. The chain crosses the membrane as a helical span at residues 19 to 39 (IVDVLPVIPLLFLLLAFVWQA).

The protein belongs to the PsbK family. PSII is composed of 1 copy each of membrane proteins PsbA, PsbB, PsbC, PsbD, PsbE, PsbF, PsbH, PsbI, PsbJ, PsbK, PsbL, PsbM, PsbT, PsbX, PsbY, PsbZ, Psb30/Ycf12, at least 3 peripheral proteins of the oxygen-evolving complex and a large number of cofactors. It forms dimeric complexes.

The protein localises to the plastid. The protein resides in the chloroplast thylakoid membrane. In terms of biological role, one of the components of the core complex of photosystem II (PSII). PSII is a light-driven water:plastoquinone oxidoreductase that uses light energy to abstract electrons from H(2)O, generating O(2) and a proton gradient subsequently used for ATP formation. It consists of a core antenna complex that captures photons, and an electron transfer chain that converts photonic excitation into a charge separation. This Tupiella akineta (Green alga) protein is Photosystem II reaction center protein K.